Reading from the N-terminus, the 23-residue chain is Alpha-amanitin proprotein (23 aa).

I1 bears the (3R,4R)-4,5-dihydroxyisoleucine; in form alpha-amanitin mark. I1 bears the (3R,4S)-4-hydroxyisoleucine; in form gamma-amanitin mark. The cyclopeptide (Ile-Pro) cross-link spans 1–8 (IWGIGCNP). Residues 2-6 (WGIGC) constitute a cross-link (2'-cysteinyl-6'-hydroxytryptophan sulfoxide (Trp-Cys)). P8 carries the post-translational modification 4-hydroxyproline. Positions 9-23 (CVGDEVTALITRGEA) are excised as a propeptide.

The protein belongs to the MSDIN fungal toxin family. Post-translationally, processed by the macrocyclase-peptidase enzyme POPB to yield a toxic cyclic decapeptide. POPB first removes 10 residues from the N-terminus. Conformational trapping of the remaining peptide forces the enzyme to release this intermediate rather than proceed to macrocyclization. The enzyme rebinds the remaining peptide in a different conformation and catalyzes macrocyclization of the N-terminal 8 residues.

Functionally, major toxin belonging to the bicyclic octapeptides amatoxins that acts by binding non-competitively to RNA polymerase II and greatly slowing the elongation of transcripts from target promoters. In Amanita fuligineoides, this protein is Alpha-amanitin proprotein.